The following is a 150-amino-acid chain: 6,7-dimethyl-8-ribityllumazine synthase (150 aa).

Residues phenylalanine 11, 42-44 (IFE), and 73-75 (CAI) contribute to the 5-amino-6-(D-ribitylamino)uracil site. Residue 78–79 (ES) participates in (2S)-2-hydroxy-3-oxobutyl phosphate binding. Histidine 81 (proton donor) is an active-site residue. Asparagine 106 is a 5-amino-6-(D-ribitylamino)uracil binding site. Arginine 120 is a (2S)-2-hydroxy-3-oxobutyl phosphate binding site.

This sequence belongs to the DMRL synthase family.

It catalyses the reaction (2S)-2-hydroxy-3-oxobutyl phosphate + 5-amino-6-(D-ribitylamino)uracil = 6,7-dimethyl-8-(1-D-ribityl)lumazine + phosphate + 2 H2O + H(+). It participates in cofactor biosynthesis; riboflavin biosynthesis; riboflavin from 2-hydroxy-3-oxobutyl phosphate and 5-amino-6-(D-ribitylamino)uracil: step 1/2. Catalyzes the formation of 6,7-dimethyl-8-ribityllumazine by condensation of 5-amino-6-(D-ribitylamino)uracil with 3,4-dihydroxy-2-butanone 4-phosphate. This is the penultimate step in the biosynthesis of riboflavin. This chain is 6,7-dimethyl-8-ribityllumazine synthase, found in Paramagnetospirillum magneticum (strain ATCC 700264 / AMB-1) (Magnetospirillum magneticum).